The primary structure comprises 321 residues: ATP phosphoribosyltransferase regulatory subunit (321 aa).

This sequence belongs to the class-II aminoacyl-tRNA synthetase family. HisZ subfamily. As to quaternary structure, heteromultimer composed of HisG and HisZ subunits.

It localises to the cytoplasm. The protein operates within amino-acid biosynthesis; L-histidine biosynthesis; L-histidine from 5-phospho-alpha-D-ribose 1-diphosphate: step 1/9. Its function is as follows. Required for the first step of histidine biosynthesis. May allow the feedback regulation of ATP phosphoribosyltransferase activity by histidine. This is ATP phosphoribosyltransferase regulatory subunit from Thiobacillus denitrificans (strain ATCC 25259 / T1).